The primary structure comprises 681 residues: DNA-directed RNA polymerase subunit beta' (681 aa).

The Zn(2+) site is built by Cys69, Cys71, Cys87, and Cys90. Mg(2+) is bound by residues Asp489, Asp491, and Asp493.

This sequence belongs to the RNA polymerase beta' chain family. RpoC1 subfamily. In terms of assembly, in plastids the minimal PEP RNA polymerase catalytic core is composed of four subunits: alpha, beta, beta', and beta''. When a (nuclear-encoded) sigma factor is associated with the core the holoenzyme is formed, which can initiate transcription. Mg(2+) is required as a cofactor. Zn(2+) serves as cofactor.

It is found in the plastid. Its subcellular location is the chloroplast. It catalyses the reaction RNA(n) + a ribonucleoside 5'-triphosphate = RNA(n+1) + diphosphate. Functionally, DNA-dependent RNA polymerase catalyzes the transcription of DNA into RNA using the four ribonucleoside triphosphates as substrates. The protein is DNA-directed RNA polymerase subunit beta' of Anthoceros angustus (Hornwort).